We begin with the raw amino-acid sequence, 642 residues long: Threonine--tRNA ligase (642 aa).

In terms of domain architecture, TGS spans 1–61 (MPVITITNGL…MQDSKLDIIT (61 aa)). The catalytic stretch occupies residues 243-534 (DHRKIGQQLD…LIEEYAGFFP (292 aa)). Zn(2+) is bound by residues C334, H385, and H511.

It belongs to the class-II aminoacyl-tRNA synthetase family. Homodimer. Zn(2+) serves as cofactor.

It is found in the cytoplasm. It catalyses the reaction tRNA(Thr) + L-threonine + ATP = L-threonyl-tRNA(Thr) + AMP + diphosphate + H(+). In terms of biological role, catalyzes the attachment of threonine to tRNA(Thr) in a two-step reaction: L-threonine is first activated by ATP to form Thr-AMP and then transferred to the acceptor end of tRNA(Thr). Also edits incorrectly charged L-seryl-tRNA(Thr). The protein is Threonine--tRNA ligase of Baumannia cicadellinicola subsp. Homalodisca coagulata.